The following is a 318-amino-acid chain: Biotin synthase (318 aa).

The Radical SAM core domain maps to 44–270 (LCGDAVNLCS…INPTANIRLA (227 aa)). Residues cysteine 62, cysteine 66, and cysteine 69 each coordinate [4Fe-4S] cluster. Residues serine 106, cysteine 138, cysteine 198, and arginine 268 each contribute to the [2Fe-2S] cluster site.

It belongs to the radical SAM superfamily. Biotin synthase family. Homodimer. [4Fe-4S] cluster serves as cofactor. It depends on [2Fe-2S] cluster as a cofactor.

The catalysed reaction is (4R,5S)-dethiobiotin + (sulfur carrier)-SH + 2 reduced [2Fe-2S]-[ferredoxin] + 2 S-adenosyl-L-methionine = (sulfur carrier)-H + biotin + 2 5'-deoxyadenosine + 2 L-methionine + 2 oxidized [2Fe-2S]-[ferredoxin]. It functions in the pathway cofactor biosynthesis; biotin biosynthesis; biotin from 7,8-diaminononanoate: step 2/2. Catalyzes the conversion of dethiobiotin (DTB) to biotin by the insertion of a sulfur atom into dethiobiotin via a radical-based mechanism. This Alkaliphilus metalliredigens (strain QYMF) protein is Biotin synthase.